Reading from the N-terminus, the 352-residue chain is Ion-translocating oxidoreductase complex subunit D (352 aa).

Transmembrane regions (helical) follow at residues 20–40, 42–62, 78–109, 123–143, and 148–168; these read IMLL…WFFG, GTLV…ALVL, ALLT…VIIA, PAMI…TSWL, and IAVN…GHTA. T187 bears the FMN phosphoryl threonine mark. 5 helical membrane-spanning segments follow: residues 214-234, 242-262, 267-287, 301-321, and 322-342; these read ILAG…GVWL, WHIP…GWLF, LAAP…FFIL, LIFG…GGYP, and DGVA…DYYT.

The protein belongs to the NqrB/RnfD family. The complex is composed of six subunits: RsxA, RsxB, RsxC, RsxD, RsxE and RsxG. It depends on FMN as a cofactor.

Its subcellular location is the cell inner membrane. Functionally, part of a membrane-bound complex that couples electron transfer with translocation of ions across the membrane. Required to maintain the reduced state of SoxR. This Shigella dysenteriae serotype 1 (strain Sd197) protein is Ion-translocating oxidoreductase complex subunit D.